Here is a 92-residue protein sequence, read N- to C-terminus: Transcription factor S4 (92 aa).

Residues 1–31 are ZR-N; sequence MRFCPKCGSFLKVKGNKMVCSKCGYSDHDVE. Cys-4, Cys-7, Cys-20, and Cys-23 together coordinate Zn(2+). The tract at residues 32-56 is flexible linker; sequence KVILKENVAHENDKTIIADGETIEG. The ZR-C stretch occupies residues 55-92; the sequence is EGRVAISLCPRCGSVRAILLNKKKRLYRCMTCNFVYNI. The Zn(2+) site is built by Cys-63 and Cys-66. Active-site residues include Lys-76, Lys-77, and Lys-78. Residues Cys-83 and Cys-86 each contribute to the Zn(2+) site.

Belongs to the archaeal RpoM/eukaryotic RPA12/RPB9/RPC11 RNA polymerase family. In terms of assembly, interacts with RNA polymerase. Zn(2+) is required as a cofactor.

A potent inhibitor of RNA polymerase (RNAP) probably involved in viral defense. Destabilizes the transcription pre-initiation complex of TBP, TFB, DNA and RNAP, inhibits abortive transcription initiation, productive initiation and transcription elongation. Increases the RNAP KM for NTPs about 50-fold. Overexpression of TFS1-tip4 (TFS1 with the active tip of this protein, phenocopies this protein) in S.acidocaldarius MW001 leads to severe growth inhibition. When bound to RNAP induces conformational changes that widen the DNA-binding channel, probably destabilizing the interaction of DNA with RNAP. This Saccharolobus solfataricus (strain ATCC 35092 / DSM 1617 / JCM 11322 / P2) (Sulfolobus solfataricus) protein is Transcription factor S4.